The primary structure comprises 281 residues: Ribosomal RNA small subunit methyltransferase A (281 aa).

6 residues coordinate S-adenosyl-L-methionine: Asn35, Leu37, Gly62, Glu83, Asp107, and Asn125.

It belongs to the class I-like SAM-binding methyltransferase superfamily. rRNA adenine N(6)-methyltransferase family. RsmA subfamily.

It localises to the cytoplasm. The catalysed reaction is adenosine(1518)/adenosine(1519) in 16S rRNA + 4 S-adenosyl-L-methionine = N(6)-dimethyladenosine(1518)/N(6)-dimethyladenosine(1519) in 16S rRNA + 4 S-adenosyl-L-homocysteine + 4 H(+). Its function is as follows. Specifically dimethylates two adjacent adenosines (A1518 and A1519) in the loop of a conserved hairpin near the 3'-end of 16S rRNA in the 30S particle. May play a critical role in biogenesis of 30S subunits. The chain is Ribosomal RNA small subunit methyltransferase A from Deinococcus geothermalis (strain DSM 11300 / CIP 105573 / AG-3a).